A 276-amino-acid polypeptide reads, in one-letter code: Diaminopimelate epimerase (276 aa).

3 residues coordinate substrate: Asn13, Gln46, and Asn66. Residue Cys75 is the Proton donor of the active site. Residues 76-77 (GN), Asn159, Asn192, and 210-211 (ER) contribute to the substrate site. The active-site Proton acceptor is Cys219. A substrate-binding site is contributed by 220-221 (GT).

Belongs to the diaminopimelate epimerase family. In terms of assembly, homodimer.

Its subcellular location is the cytoplasm. It carries out the reaction (2S,6S)-2,6-diaminopimelate = meso-2,6-diaminopimelate. It participates in amino-acid biosynthesis; L-lysine biosynthesis via DAP pathway; DL-2,6-diaminopimelate from LL-2,6-diaminopimelate: step 1/1. Catalyzes the stereoinversion of LL-2,6-diaminopimelate (L,L-DAP) to meso-diaminopimelate (meso-DAP), a precursor of L-lysine and an essential component of the bacterial peptidoglycan. The protein is Diaminopimelate epimerase of Pseudomonas savastanoi pv. phaseolicola (strain 1448A / Race 6) (Pseudomonas syringae pv. phaseolicola (strain 1448A / Race 6)).